Consider the following 245-residue polypeptide: Eukaryotic translation initiation factor 6 (245 aa).

It belongs to the eIF-6 family. Monomer. Associates with the 60S ribosomal subunit.

It localises to the cytoplasm. The protein resides in the nucleus. It is found in the nucleolus. Binds to the 60S ribosomal subunit and prevents its association with the 40S ribosomal subunit to form the 80S initiation complex in the cytoplasm. May also be involved in ribosome biogenesis. The chain is Eukaryotic translation initiation factor 6 (eif6) from Xenopus laevis (African clawed frog).